A 1045-amino-acid chain; its full sequence is Collagen alpha-1(VI) chain (1045 aa).

Positions 1–24 (MKMLQGRLPLTVLHLFLLLGGGMT) are cleaved as a signal peptide. In terms of domain architecture, VWFA 1 spans 65–255 (DIFFVLDTSE…LTDDEIDNTI (191 aa)). The disordered stretch occupies residues 277 to 613 (PSRGLSGPSG…GPPGPGGPPG (337 aa)). The tract at residues 280–540 (GLSGPSGPPG…RGDDGRPGNG (261 aa)) is triple-helical region. The span at 297–309 (PGLPGDRGLPGDP) shows a compositional bias: low complexity. A compositionally biased stretch (basic and acidic residues) spans 327 to 360 (QGIRGEKGGRGAKGSKGDKGKRGIDGVDGQKGED). Low complexity predominate over residues 375–392 (DGAPGSSGPKGDPGPYGT). The segment covering 400-409 (GTPGTGGRPG) has biased composition (gly residues). 2 short sequence motifs (cell attachment site) span residues 501-503 (RGD) and 554-556 (RGD). Positions 600-613 (EGPPGPPGPGGPPG) are enriched in pro residues. 2 consecutive VWFA domains span residues 638 to 825 (DLLF…LHNV) and 849 to 1035 (DITM…YQSI).

This sequence belongs to the type VI collagen family.

The protein localises to the secreted. The protein resides in the extracellular space. It is found in the extracellular matrix. In terms of biological role, collagen VI acts as a cell-binding protein. This Xenopus laevis (African clawed frog) protein is Collagen alpha-1(VI) chain (col6a1).